We begin with the raw amino-acid sequence, 429 residues long: tRNA threonylcarbamoyladenosine dehydratase 1 (429 aa).

The next 2 membrane-spanning stretches (helical) occupy residues 3–23 (NNTW…TQLA) and 74–94 (EQYI…TMLI). Phosphoserine is present on serine 259. A helical transmembrane segment spans residues 279–299 (LPELGTMPGIFGLSIATWILT).

This sequence belongs to the HesA/MoeB/ThiF family.

It localises to the mitochondrion outer membrane. In terms of biological role, catalyzes the ATP-dependent dehydration of threonylcarbamoyladenosine at position 37 (t(6)A37) to form cyclic t(6)A37 (ct(6)A37) in tRNAs that read codons beginning with adenine. In Saccharomyces cerevisiae (strain ATCC 204508 / S288c) (Baker's yeast), this protein is tRNA threonylcarbamoyladenosine dehydratase 1 (TCD1).